Here is a 578-residue protein sequence, read N- to C-terminus: Peptidyl-prolyl cis-trans isomerase-like 2 (578 aa).

One can recognise a U-box domain in the interval 40-114 (RRLPFNFCAA…SDSLGAGLSD (75 aa)). Residues 240–260 (KAREQGGDVNRSSTALTKPTG) are disordered. The PPIase cyclophilin-type domain occupies 321 to 475 (ATGFARMETN…NKILIKDIVI (155 aa)). A disordered region spans residues 505–578 (GTDDDKTTWT…GGGFGNFDNW (74 aa)). Residues 538-548 (KTTTQQSTPTV) are compositionally biased toward polar residues. Residues 551–560 (ADLEDVDTWE) are compositionally biased toward acidic residues. Over residues 569–578 (GGGFGNFDNW) the composition is skewed to gly residues.

Belongs to the cyclophilin-type PPIase family. PPIL2 subfamily.

It localises to the nucleus. It catalyses the reaction [protein]-peptidylproline (omega=180) = [protein]-peptidylproline (omega=0). The enzyme catalyses S-ubiquitinyl-[E2 ubiquitin-conjugating enzyme]-L-cysteine + [acceptor protein]-L-lysine = [E2 ubiquitin-conjugating enzyme]-L-cysteine + N(6)-ubiquitinyl-[acceptor protein]-L-lysine.. The protein operates within protein modification; protein ubiquitination. May catalyze the cis-trans isomerization of proline imidic peptide bonds in oligopeptides thereby assisting the folding of proteins. May also function as a chaperone, playing a role in intracellular transport of proteins. May also have a protein ubiquitin ligase activity acting as an E3 ubiquitin protein ligase or as a ubiquitin-ubiquitin ligase promoting elongation of ubiquitin chains on proteins. This chain is Peptidyl-prolyl cis-trans isomerase-like 2 (CYP8), found in Gibberella zeae (strain ATCC MYA-4620 / CBS 123657 / FGSC 9075 / NRRL 31084 / PH-1) (Wheat head blight fungus).